We begin with the raw amino-acid sequence, 304 residues long: MSWIERIKSNITPTRKASIPEGVWTKCDSCGQVLYRAELERNLEVCPKCDHHMRMSARNRLHSLLDEGSLVELGSELEPKDVLKFRDSKKYKDRLASAQKETGEKDALVVMKGTLHGMPVVAAAFEFAFMGGSMGSVVGARFVRAVEQALEDNCPLICFSASGGARMQEALMSLMQMAKTSAALAKMQERGLPYISVLTDPTMGGVSASFAMLGDLNIAEPKALIGFAGPRVIEQTVREKLPPGFQRSEFLIEKGAIDMIVRRPEMRLKLASILAKLMNLPAPNPDAPREGVVVPPAPGQESEA.

A CoA carboxyltransferase N-terminal domain is found at 23–292 (VWTKCDSCGQ…PNPDAPREGV (270 aa)). Zn(2+) contacts are provided by Cys27, Cys30, Cys46, and Cys49. Residues 27 to 49 (CDSCGQVLYRAELERNLEVCPKC) form a C4-type zinc finger. A disordered region spans residues 284-304 (NPDAPREGVVVPPAPGQESEA).

Belongs to the AccD/PCCB family. In terms of assembly, acetyl-CoA carboxylase is a heterohexamer composed of biotin carboxyl carrier protein (AccB), biotin carboxylase (AccC) and two subunits each of ACCase subunit alpha (AccA) and ACCase subunit beta (AccD). Requires Zn(2+) as cofactor.

It is found in the cytoplasm. The catalysed reaction is N(6)-carboxybiotinyl-L-lysyl-[protein] + acetyl-CoA = N(6)-biotinyl-L-lysyl-[protein] + malonyl-CoA. It participates in lipid metabolism; malonyl-CoA biosynthesis; malonyl-CoA from acetyl-CoA: step 1/1. Component of the acetyl coenzyme A carboxylase (ACC) complex. Biotin carboxylase (BC) catalyzes the carboxylation of biotin on its carrier protein (BCCP) and then the CO(2) group is transferred by the transcarboxylase to acetyl-CoA to form malonyl-CoA. The protein is Acetyl-coenzyme A carboxylase carboxyl transferase subunit beta of Salmonella arizonae (strain ATCC BAA-731 / CDC346-86 / RSK2980).